Consider the following 79-residue polypeptide: Small ribosomal subunit protein uS17 (79 aa).

It belongs to the universal ribosomal protein uS17 family. As to quaternary structure, part of the 30S ribosomal subunit.

Functionally, one of the primary rRNA binding proteins, it binds specifically to the 5'-end of 16S ribosomal RNA. In Bartonella henselae (strain ATCC 49882 / DSM 28221 / CCUG 30454 / Houston 1) (Rochalimaea henselae), this protein is Small ribosomal subunit protein uS17.